A 1070-amino-acid polypeptide reads, in one-letter code: DNA-directed RNA polymerase subunit beta (1070 aa).

The protein belongs to the RNA polymerase beta chain family. In plastids the minimal PEP RNA polymerase catalytic core is composed of four subunits: alpha, beta, beta', and beta''. When a (nuclear-encoded) sigma factor is associated with the core the holoenzyme is formed, which can initiate transcription.

The protein resides in the plastid. It localises to the chloroplast. It carries out the reaction RNA(n) + a ribonucleoside 5'-triphosphate = RNA(n+1) + diphosphate. Functionally, DNA-dependent RNA polymerase catalyzes the transcription of DNA into RNA using the four ribonucleoside triphosphates as substrates. This is DNA-directed RNA polymerase subunit beta from Phaseolus vulgaris (Kidney bean).